The sequence spans 359 residues: GTP 3',8-cyclase (359 aa).

In terms of domain architecture, Radical SAM core spans 33-260 (RFGRRHDSLR…PTGRENPSAP (228 aa)). Arg42 contacts GTP. Residues Cys49 and Cys53 each coordinate [4Fe-4S] cluster. Tyr55 contacts S-adenosyl-L-methionine. Cys56 provides a ligand contact to [4Fe-4S] cluster. Arg93 is a binding site for GTP. Residue Gly97 participates in S-adenosyl-L-methionine binding. GTP is bound at residue Thr124. Ser148 provides a ligand contact to S-adenosyl-L-methionine. Position 185 (Lys185) interacts with GTP. Met219 is a binding site for S-adenosyl-L-methionine. [4Fe-4S] cluster contacts are provided by Cys286 and Cys289. 291–293 (RLR) provides a ligand contact to GTP. Cys303 contributes to the [4Fe-4S] cluster binding site.

The protein belongs to the radical SAM superfamily. MoaA family. In terms of assembly, monomer and homodimer. [4Fe-4S] cluster serves as cofactor.

The catalysed reaction is GTP + AH2 + S-adenosyl-L-methionine = (8S)-3',8-cyclo-7,8-dihydroguanosine 5'-triphosphate + 5'-deoxyadenosine + L-methionine + A + H(+). It participates in cofactor biosynthesis; molybdopterin biosynthesis. Catalyzes the cyclization of GTP to (8S)-3',8-cyclo-7,8-dihydroguanosine 5'-triphosphate. The chain is GTP 3',8-cyclase from Rhodopirellula baltica (strain DSM 10527 / NCIMB 13988 / SH1).